The chain runs to 781 residues: Catenin beta-1 (781 aa).

At Ala-2 the chain carries N-acetylalanine. An interaction with VCL region spans residues 2-23 (ATQADLMELDMAMEPDRKAAVS). Position 23 is a phosphoserine; by GSK3-beta; alternate (Ser-23). Ser-23 is a glycosylation site (O-linked (GlcNAc) serine; alternate). Residue Ser-29 is modified to Phosphoserine; by GSK3-beta. Residues Ser-33 and Ser-37 each carry the phosphoserine; by GSK3-beta and HIPK2 modification. Residues 34-57 (GIHSGATTTAPSLSGKGNPEEEDV) are disordered. Phosphothreonine; by GSK3-beta is present on Thr-41. Ser-45 bears the Phosphoserine mark. An N6-acetyllysine modification is found at Lys-49. Tyr-64 is subject to Phosphotyrosine; by PTK6. Tyr-142 carries the post-translational modification Phosphotyrosine; by FYN and PTK6. ARM repeat units follow at residues 151–191 (RAIP…IMRS), 193–234 (QMVS…IFKS), 235–276 (GGIP…VRLA), 277–318 (GGLQ…ILAS), 319–360 (GGPQ…IVEA), 361–389 (GGMQALGLHLTDPSQRLVQNCLWTLRNLS), 400–441 (GLLG…VCQV), 442–484 (GGIE…AQNA), 489–530 (YGLP…LREQ), 531–571 (GAIP…EIVE), 594–636 (NTIP…AEGA), and 637–666 (TAPLTELLHSRNEGVATYAAAVLFRMSEDK). The tract at residues 156–178 (LTKLLNDEDQVVVNKAAVMVHQL) is interaction with BCL9. A Phosphoserine; by CDK5 modification is found at Ser-191. Ser-246 carries the post-translational modification Phosphoserine; by CDK5. Tyr-331 carries the phosphotyrosine; by PTK6 modification. At Tyr-333 the chain carries Phosphotyrosine; by SRC and PTK6. Ser-552 carries the post-translational modification Phosphoserine. At Thr-556 the chain carries (Microbial infection) Phosphothreonine. Residue Thr-556 is modified to Phosphothreonine. Cys-619 carries the post-translational modification S-nitrosocysteine. The residue at position 675 (Ser-675) is a Phosphoserine. Residues 705 to 781 (EPLGYRQDDP…NQLAWFDTDL (77 aa)) are disordered. The segment covering 734-745 (MMEHEMGGHHPG) has biased composition (basic and acidic residues). The interval 772–781 (NQLAWFDTDL) is interaction with SCRIB.

The protein belongs to the beta-catenin family. Two separate complex-associated pools are found in the cytoplasm. The majority is present as component of an E-cadherin:catenin adhesion complex composed of at least E-cadherin/CDH1 and beta-catenin/CTNNB1, and possibly alpha-catenin/CTNNA1; the complex is located to adherens junctions. The stable association of CTNNA1 is controversial as CTNNA1 was shown not to bind to F-actin when assembled in the complex. Alternatively, the CTNNA1-containing complex may be linked to F-actin by other proteins such as LIMA1. Another cytoplasmic pool is part of a large complex containing AXIN1, AXIN2, APC, CSNK1A1 and GSK3B that promotes phosphorylation on N-terminal Ser and Thr residues and ubiquitination of CTNNB1 via BTRC and its subsequent degradation by the proteasome. Wnt-dependent activation of DVL antagonizes the action of GSK3B. When GSK3B activity is inhibited the complex dissociates, CTNNB1 is dephosphorylated and is no longer targeted for destruction. The stabilized protein translocates to the nucleus, where it binds TCF/LEF-1 family members, BCL9, BCL9L and possibly also RUVBL1 and CHD8. Binds CTNNBIP and EP300. CTNNB1 forms a ternary complex with LEF1 and EP300 that is disrupted by CTNNBIP1 binding. Interacts with TAX1BP3 (via the PDZ domain); this interaction inhibits the transcriptional activity of CTNNB1. Interacts with AJAP1, BAIAP1, CARM1, CTNNA3, CXADR and PCDH11Y. Binds NHERF1. Interacts with GLIS2 and MUC1. Interacts with SLC30A9. Interacts with XIRP1. Interacts directly with AXIN1; the interaction is regulated by CDK2 phosphorylation of AXIN1. Interacts with SCRIB. Interacts with RAPGEF2. Interacts with PTPRU (via the cytoplasmic juxtamembrane domain). Interacts with EMD. Interacts with TNIK and TCF7L2. Interacts with SESTD1 and TRPC4. Interacts with CAV1. Interacts with TRPV4. The TRPV4 and CTNNB1 complex can interact with CDH1. Interacts with VCL. Interacts with PTPRJ. Interacts with PKT7 and CDK2. Interacts with FAT1 (via the cytoplasmic domain). Interacts with NANOS1 and NDRG2. Interacts with isoform 1 of NEK2. Interacts with both isoform 1 and isoform 2 of CDK5. Interacts with PTK6. Interacts with SOX7; this interaction may lead to proteasomal degradation of active CTNNB1 and thus inhibition of Wnt/beta-catenin-stimulated transcription. Identified in a complex with HINT1 and MITF. Interacts with FHIT. The CTNNB1 and TCF7L2/TCF4 complex interacts with PML (isoform PML-4). Interacts with FERMT2. Identified in a complex with TCF7L2/TCF4 and FERMT2. Interacts with RORA. May interact with P-cadherin/CDH3. Interacts with RNF220. Interacts with CTNND2. Interacts (via the C-terminal region) with CBY1. The complex composed, at least, of APC, CTNNB1 and GSK3B interacts with JPT1; the interaction requires the inactive form of GSK3B (phosphorylated at 'Ser-9'). Interacts with DLG5. Interacts with FAM53B; promoting translocation to the nucleus. Interacts with TMEM170B. Interacts with AHI1. Interacts with GID8. Component of an cadherin:catenin adhesion complex composed of at least of CDH26, beta-catenin/CTNNB1, alpha-catenin/CTNNA1 and p120 catenin/CTNND1. Forms a complex comprising APPL1, RUVBL2, APPL2, HDAC1 and HDAC2. Interacts with IRF2BPL; mediates the ubiquitination and degradation of CTNNB1. Interacts with AMFR. Interacts with LMBR1L. Interacts with SOX30; prevents interaction of CTNNB1 with TCF7L2/TCF4 and leads to inhibition of Wnt signaling. Interacts with SOX9; inhibiting CTNNB1 activity by competing with the binding sites of TCF/LEF within CTNNB1, thereby inhibiting the Wnt signaling. Interacts with SPN/CD43 cytoplasmic tail. Interacts (when phosphorylated at Tyr-333) with isoform M2 of PKM (PKM2); promoting transcription activation. Interacts with PKP2 (via HEAD domain). Interacts with CDH1. Interacts (when unphosphorylated) with FLYWCH1, perhaps preventing interaction of CTNNB1 with TCF4, and thereby regulating transcription activation; phosphorylation of CTNNB1 may inhibit the interaction. Interacts (via the central armadillo domains) with probable transcriptional regulator ADNP (via N-terminal region); interaction is direct and stabilizes CTNNB1 by modulating its phosphorylation by glycogen synthase kinase-3 beta GSK3B. Interacts with NR5A2. Interacts with DSG2; the interaction promotes localization of CTNNB1 at cell junctions thus reducing its nuclear localization and subsequent transcription of CTNNB1/TCF-target genes. As to quaternary structure, (Microbial infection) Interacts with herpes virus 8 protein vPK; this interaction inhibits the Wnt signaling pathway. Post-translationally, phosphorylation at Ser-552 by AMPK promotes stabilization of the protein, enhancing TCF/LEF-mediated transcription. Phosphorylation by GSK3B requires prior phosphorylation of Ser-45 by another kinase. Phosphorylation proceeds then from Thr-41 to Ser-37 and Ser-33. Phosphorylated by NEK2. EGF stimulates tyrosine phosphorylation. Phosphorylated on Ser-33 and Ser-37 by HIPK2 and GSK3B, this phosphorylation triggers proteasomal degradation. Phosphorylation on Ser-191 and Ser-246 by CDK5. Phosphorylation by CDK2 regulates insulin internalization. Phosphorylation by PTK6 at Tyr-64, Tyr-142, Tyr-331 and/or Tyr-333 with the predominant site at Tyr-64 is not essential for inhibition of transcriptional activity. Phosphorylation by SRC at Tyr-333 promotes interaction with isoform M2 of PKM (PKM2); promoting transcription activation. In terms of processing, ubiquitinated by the SCF(BTRC) E3 ligase complex when phosphorylated by GSK3B, leading to its degradation. Ubiquitinated by a E3 ubiquitin ligase complex containing UBE2D1, SIAH1, CACYBP/SIP, SKP1, APC and TBL1X, leading to its subsequent proteasomal degradation. Ubiquitinated and degraded following interaction with SOX9. Ubiquitinated via 'Lys-11'- and 'Lys-29'-linked ubiquitin chains by UBR5, leading to its stabilization. S-nitrosylation at Cys-619 within adherens junctions promotes VEGF-induced, NO-dependent endothelial cell permeability by disrupting interaction with E-cadherin, thus mediating disassembly adherens junctions. Post-translationally, O-glycosylation at Ser-23 decreases nuclear localization and transcriptional activity, and increases localization to the plasma membrane and interaction with E-cadherin CDH1. In terms of processing, deacetylated at Lys-49 by SIRT1. Phosphorylated at Thr-556 by herpes virus 1/HHV-1 leading to CTNNB1 inhibition. As to expression, expressed in several hair follicle cell types: basal and peripheral matrix cells, and cells of the outer and inner root sheaths. Expressed in colon. Present in cortical neurons (at protein level). Expressed in breast cancer tissues (at protein level).

The protein localises to the cytoplasm. Its subcellular location is the nucleus. The protein resides in the cytoskeleton. It localises to the cell junction. It is found in the adherens junction. The protein localises to the cell membrane. Its subcellular location is the microtubule organizing center. The protein resides in the centrosome. It localises to the spindle pole. It is found in the synapse. The protein localises to the cilium basal body. In terms of biological role, key downstream component of the canonical Wnt signaling pathway. In the absence of Wnt, forms a complex with AXIN1, AXIN2, APC, CSNK1A1 and GSK3B that promotes phosphorylation on N-terminal Ser and Thr residues and ubiquitination of CTNNB1 via BTRC and its subsequent degradation by the proteasome. In the presence of Wnt ligand, CTNNB1 is not ubiquitinated and accumulates in the nucleus, where it acts as a coactivator for transcription factors of the TCF/LEF family, leading to activate Wnt responsive genes. Also acts as a coactivator for other transcription factors, such as NR5A2. Promotes epithelial to mesenchymal transition/mesenchymal to epithelial transition (EMT/MET) via driving transcription of CTNNB1/TCF-target genes. Involved in the regulation of cell adhesion, as component of an E-cadherin:catenin adhesion complex. Acts as a negative regulator of centrosome cohesion. Involved in the CDK2/PTPN6/CTNNB1/CEACAM1 pathway of insulin internalization. Blocks anoikis of malignant kidney and intestinal epithelial cells and promotes their anchorage-independent growth by down-regulating DAPK2. Disrupts PML function and PML-NB formation by inhibiting RANBP2-mediated sumoylation of PML. Promotes neurogenesis by maintaining sympathetic neuroblasts within the cell cycle. Involved in chondrocyte differentiation via interaction with SOX9: SOX9-binding competes with the binding sites of TCF/LEF within CTNNB1, thereby inhibiting the Wnt signaling. Acts as a positive regulator of odontoblast differentiation during mesenchymal tooth germ formation, via promoting the transcription of differentiation factors such as LEF1, BMP2 and BMP4. Activity is repressed in a MSX1-mediated manner at the bell stage of mesenchymal tooth germ formation which prevents premature differentiation of odontoblasts. The sequence is that of Catenin beta-1 from Homo sapiens (Human).